Reading from the N-terminus, the 247-residue chain is Protein NipSnap homolog 3A (247 aa).

An N6-acetyllysine mark is found at K48 and K166.

Belongs to the NipSnap family. In terms of assembly, interacts with the Salmonella typhimurium virulence protein spiC. In terms of tissue distribution, ubiquitous. Highly expressed in liver, kidney and muscle. Expressed at intermediate level in brain, heart, colon, thymus, kidney, small intestine, placenta, lung, leukocytes and spleen.

It localises to the cytoplasm. The protein localises to the cytosol. The sequence is that of Protein NipSnap homolog 3A (NIPSNAP3A) from Homo sapiens (Human).